Consider the following 75-residue polypeptide: Mating pheromone Er-1/Er-3 (75 aa).

Positions 1 to 19 (MNKLAILAIIAMVLFSANA) are cleaved as a signal peptide. Residues 20-35 (FRFQSRLRSNVEAKTG) constitute a propeptide that is removed on maturation. Intrachain disulfides connect Cys38/Cys54, Cys45/Cys71, and Cys50/Cys63.

Homodimer.

The protein resides in the secreted. It is found in the cell membrane. Mating ciliate pheromones (or gamones) are diffusible extracellular communication signals that distinguish different intraspecific classes of cells commonly referred to as 'mating types'. They prepare the latter for conjugation by changing their cell surface properties. The membrane-bound form promotes inter-cellular communication and adhesion for mating pair formation and may act as binding site for the secreted form. In Euplotes raikovi, this protein is Mating pheromone Er-1/Er-3 (MAT1).